The sequence spans 89 residues: uncharacterized protein (89 aa).

The disordered stretch occupies residues 31 to 89; sequence TPQPLEPHEHPKPMEPNEFDPKPDDPPRNPDPSPFPNEVPKPKPSDFPIPDELYPQPIV. Residues 36–58 show a composition bias toward basic and acidic residues; the sequence is EPHEHPKPMEPNEFDPKPDDPPR. Positions 59–69 are enriched in pro residues; it reads NPDPSPFPNEV.

This is an uncharacterized protein from Dictyostelium discoideum (Social amoeba).